Here is a 553-residue protein sequence, read N- to C-terminus: MVDMGGLDNLIANTAYLQARKTSDADSKELQRRRRSLMLPGPQSCEQLRQAMPADFNSLCEQQPIGRRLFRDFLATVPAYQEAMGFLEEVQSWELAEEGPAKGSTLQALVATCAVAPNPGQPHSFLSPALVTKCQAATTDEERASLVEQAKAEAMAFLQDQPFREFLVSPFYDKFLQWKVFEMQPVSDKYFEEFRVLGKGGFGEVCAVQVKNTGKMYACKKLDKKRLKKKSGEKMALSEKEILEKVSSPFVVSLAYAFESKSHLCLVMSLMNGGDLKFHIYSVGERGLDMNRVIFYSAQMTCGVLHLHSLGIVYRDLKPENVLLDDLGNCRLSDLGLAVQIQDGKPVTQRAGTNGYMAPEILMEKASYSYPVDWFAMGCSIYEMVAGRTPFKDYKEKISKEDLKQRTLKEEVRFQHQSFTEEAKDICRLFLAKTPEQRLGSREKSDDPRKHHFFKTINFPRLEAGLVDPPFVPDPSVVYAKDVDEIEDFSEVRGVEFDDKDKQFFQRFATGAVPIAWQEEIIETGLFEELNDPNRPAGCGEGNSSRSGVCLLL.

Serine 36 is modified (phosphoserine; by PKA). Residues phenylalanine 56–leucine 176 form the RGS domain. In terms of domain architecture, Protein kinase spans phenylalanine 191–phenylalanine 454. Residues leucine 197–valine 205 and lysine 220 each bind ATP. The active-site Proton acceptor is aspartate 316. One can recognise an AGC-kinase C-terminal domain in the interval lysine 455 to glutamate 520. Cysteine 550 is subject to Cysteine methyl ester. Cysteine 550 is lipidated: S-geranylgeranyl cysteine. Positions leucine 551–leucine 553 are cleaved as a propeptide — removed in mature form.

This sequence belongs to the protein kinase superfamily. AGC Ser/Thr protein kinase family. GPRK subfamily. In terms of assembly, interacts (when prenylated) with PDE6D; this promotes release from membranes. Autophosphorylated in vitro at Ser-490. Phosphorylation at Ser-36 is regulated by light and activated by cAMP.

It localises to the membrane. The enzyme catalyses L-threonyl-[rhodopsin] + ATP = O-phospho-L-threonyl-[rhodopsin] + ADP + H(+). It carries out the reaction L-seryl-[rhodopsin] + ATP = O-phospho-L-seryl-[rhodopsin] + ADP + H(+). With respect to regulation, inhibited by phosphorylation of Ser-36. Functionally, retina-specific kinase involved in the shutoff of the photoresponse and adaptation to changing light conditions via cone opsin phosphorylation, including rhodopsin (RHO). The chain is Rhodopsin kinase GRK7 (GRK7) from Sus scrofa (Pig).